A 581-amino-acid polypeptide reads, in one-letter code: Intermediate filament protein ifa-2 (581 aa).

2 disordered regions span residues 1–35 and 47–68; these read MTDP…GSGN and SSVS…RDNR. The tract at residues 1–74 is head; the sequence is MTDPDSYRSS…RDNREREKKE (74 aa). Residues 7–28 show a composition bias toward polar residues; that stretch reads YRSSITSRPSFNRTVTSSSQNY. The IF rod domain occupies 71–424; that stretch reads EKKEIMELND…QMLEGNSEGN (354 aa). The interval 75-106 is coil 1A; the sequence is IMELNDRLASYIEKVRFLDAQNRKLDADLKML. The linker 1 stretch occupies residues 107–120; the sequence is QGRFGKSTGSVKVM. Residues 121–258 form a coil 1B region; it reads YEMEITTATN…RGFETELKEL (138 aa). The segment at 259–276 is linker 12; sequence QAQAARDTTSENREYFKN. A coil 2 region spans residues 277–424; sequence ELANAMRDIR…QMLEGNSEGN (148 aa). The segment at 425–578 is tail; that stretch reads GLRQLVEKVV…THIQRQSQQT (154 aa). A disordered region spans residues 449 to 469; sequence RVVKGEHSSRTSYQRSAKGNV. Residues 457 to 574 form the LTD domain; it reads SRTSYQRSAK…EERATHIQRQ (118 aa).

The protein belongs to the intermediate filament family. In terms of assembly, forms some heteromeric filaments with ifb-1. In terms of tissue distribution, mainly expressed in regions of the hypodermis adjacent to muscle. Expressed in longitudinal stripes where the mechanosensory neurons interface with the hypodermis. Also expressed to the uterine seam and within the uterine-vulval cells.

It is found in the cell junction. The protein resides in the hemidesmosome. Cytoplasmic intermediate filaments provide mechanical strength to cells. Essential protein, involved in attachment structures in epidermal cells that connect muscles to the external cuticle. Probably acts by forming hypodermal hemidesmosome complexes that help mediate muscle-cuticle force transduction. Although expressed during embryogenesis, it is not required for embryonic development of muscle-cuticle linkages nor for the localization of other proteins to the hemidesmosomes in embryos. The chain is Intermediate filament protein ifa-2 from Caenorhabditis elegans.